Here is a 1117-residue protein sequence, read N- to C-terminus: Cytospin-A (1117 aa).

Disordered stretches follow at residues 1–176 (MKKA…NQIS), 293–323 (SLSP…GSVE), and 358–390 (SSDD…NASE). Composition is skewed to low complexity over residues 45-72 (TTAS…TNGV) and 99-119 (KIST…NKES). Basic and acidic residues-rich tracts occupy residues 120–131 (SSTRERLRERTR) and 158–171 (TTTE…KSKS). The stretch at 168–280 (KSKSDNQISD…LNALGFSLEQ (113 aa)) forms a coiled coil. Polar residues predominate over residues 293-303 (SLSPEITPGNQ). The segment covering 358-377 (SSDDALDAPSSSESEGIPSI) has biased composition (low complexity). A phosphoserine mark is found at Ser384, Ser385, and Ser389. 2 coiled-coil regions span residues 394–449 (ACLT…MESL) and 487–807 (RYME…RGRV). The interval 852 to 878 (SQVPNPTAAAIPRTPLSPSPMKTPPAA) is disordered. Residues Ser868, Ser881, and Ser887 each carry the phosphoserine modification. A disordered region spans residues 920–997 (TSSTSRPASL…PTTRSRIREE (78 aa)). Residues 946–956 (RSSEEMKRDIS) are compositionally biased toward basic and acidic residues. Residues 971–990 (TTSPQLSLSSSPTASVTPTT) are compositionally biased toward low complexity. The region spanning 1011-1116 (GSKRNALLKW…YVTAIYKYFE (106 aa)) is the Calponin-homology (CH) domain.

Belongs to the cytospin-A family. In terms of assembly, may interact with both microtubules and actin cytoskeleton.

It is found in the cytoplasm. The protein localises to the cytoskeleton. Its subcellular location is the spindle. The protein resides in the cell junction. It localises to the gap junction. In terms of biological role, involved in cytokinesis and spindle organization. May play a role in actin cytoskeleton organization and microtubule stabilization and hence required for proper cell adhesion and migration. The polypeptide is Cytospin-A (SPECC1L) (Canis lupus familiaris (Dog)).